A 234-amino-acid polypeptide reads, in one-letter code: Elongation factor Tu, chloroplastic (234 aa).

The tr-type G domain occupies 1-125 (KNMITGAAQM…KVDSYIPTPE (125 aa)). 47–50 (NKQD) is a binding site for GTP.

This sequence belongs to the TRAFAC class translation factor GTPase superfamily. Classic translation factor GTPase family. EF-Tu/EF-1A subfamily.

It is found in the plastid. Its subcellular location is the chloroplast. The catalysed reaction is GTP + H2O = GDP + phosphate + H(+). In terms of biological role, GTP hydrolase that promotes the GTP-dependent binding of aminoacyl-tRNA to the A-site of ribosomes during protein biosynthesis. The polypeptide is Elongation factor Tu, chloroplastic (tufA) (Pandorina morum (Freshwater green alga)).